Reading from the N-terminus, the 265-residue chain is tRNA pseudouridine synthase A (265 aa).

Catalysis depends on D52, which acts as the Nucleophile. Y105 provides a ligand contact to substrate.

The protein belongs to the tRNA pseudouridine synthase TruA family.

The catalysed reaction is uridine(38/39/40) in tRNA = pseudouridine(38/39/40) in tRNA. Functionally, formation of pseudouridine at positions 38, 39 and 40 in the anticodon stem and loop of transfer RNAs. This chain is tRNA pseudouridine synthase A, found in Archaeoglobus fulgidus (strain ATCC 49558 / DSM 4304 / JCM 9628 / NBRC 100126 / VC-16).